The primary structure comprises 453 residues: MAGAGGGGCPTGGNDFQWCFSQVKGAVDEDVAEADIISTVEFNYSGDLLATGDKGGRVVIFQREQENKGRAHSRGEYNVYSTFQSHEPEFDYLKSLEIEEKINKIRWLPQQNAAHFLLSTNDKTIKLWKISERDKRAEGYNLKDEDGRLRDPFRITALRVPILKPMDLMVEASPRRIFANAHTYHINSISVNSDHETYLSADDLRINLWHLEITDRSFNIVDIKPANMEELTEVITAAEFHPHQCNVFVYSSSKGTIRLCDMRSSALCDRHAKFFEEPEDPSSRSFFSEIISSISDVKFSHSGRYMMTRDYLSVKVWDLNMEGRPVETHHVHEYLRSKLCSLYENDCIFDKFECCWNGSDSAIMTGSYNNFFRMFDRNTRRDVTLEASRENSKPRASLKPRKVCSGGKRKKDEISVDSLDFNKKILHTAWHPMESIIAVAATNNLYIFQDKIN.

WD repeat units lie at residues 32-71 (AEAD…KGRA), 97-138 (EIEE…KRAE), 181-219 (AHTY…RSFN), and 230-270 (ELTE…LCDR). A Phosphoserine modification is found at Ser-285. 3 WD repeats span residues 289 to 327 (EIIS…RPVE), 344 to 385 (ENDC…DVTL), and 420 to 452 (DFNK…QDKI). A Phosphotyrosine modification is found at Tyr-305. Thr-308 carries the phosphothreonine modification. A disordered region spans residues 385 to 406 (LEASRENSKPRASLKPRKVCSG).

Belongs to the phosphatase 2A regulatory subunit B family. As to quaternary structure, PP2A consists of a common heterodimeric core enzyme, composed of a 36 kDa catalytic subunit (subunit C) and a 65 kDa constant regulatory subunit (PR65 or subunit A), that associates with a variety of regulatory subunits. Proteins that associate with the core dimer include three families of regulatory subunits B (the R2/B/PR55/B55, R3/B''/PR72/PR130/PR59 and R5/B'/B56 families), the 48 kDa variable regulatory subunit, viral proteins, and cell signaling molecules. Interacts with ENSA (when phosphorylated at 'Ser-67') and ARPP19 (when phosphorylated at 'Ser-62'), leading to inhibit PP2A activity. Interacts with IER5. Widely expressed with high levels in brain, heart, placenta, skeletal muscle, testis, thymus and spleen.

The protein localises to the cytoplasm. Its function is as follows. Substrate-recognition subunit of protein phosphatase 2A (PP2A) that plays a key role in cell cycle by controlling mitosis entry and exit. Involved in chromosome clustering during late mitosis by mediating dephosphorylation of MKI67. The activity of PP2A complexes containing PPP2R2D (PR55-delta) fluctuate during the cell cycle: the activity is high in interphase and low in mitosis. This chain is Serine/threonine-protein phosphatase 2A 55 kDa regulatory subunit B delta isoform (Ppp2r2d), found in Rattus norvegicus (Rat).